A 302-amino-acid chain; its full sequence is uncharacterized protein (302 aa).

Positions 13–89 constitute an S4 RNA-binding domain; that stretch reads QTLFKFLKKT…VNLDIVYEDN (77 aa). Asp-141 is an active-site residue.

It belongs to the pseudouridine synthase RluA family.

The catalysed reaction is a uridine in RNA = a pseudouridine in RNA. This is an uncharacterized protein from Mycoplasma capricolum subsp. capricolum (strain California kid / ATCC 27343 / NCTC 10154).